The primary structure comprises 442 residues: uncharacterized protein (442 aa).

A signal peptide spans 1–23; that stretch reads MEILLIVLGAVVAGLLCPVQTAA. Disordered stretches follow at residues 36–67 and 91–115; these read TSIS…NSSD and ANET…TNTR. Residues 48–67 show a composition bias toward low complexity; it reads TSSGELSQSTFSSSSTNSSD. N-linked (GlcNAc...) asparagine glycosylation is found at N64, N92, N99, N130, N174, N225, N244, N346, N363, N386, and N398.

It localises to the secreted. This is an uncharacterized protein from Arthroderma benhamiae (strain ATCC MYA-4681 / CBS 112371) (Trichophyton mentagrophytes).